The sequence spans 765 residues: Palmitoyltransferase ZDHHC8 (765 aa).

At 1 to 13 (MPRSPGTRLKPAK) the chain is on the cytoplasmic side. A helical transmembrane segment spans residues 14 to 34 (YIPVATAAALLVGSSTLFFVF). At 35-52 (TCPWLTRAVSPAVPVYNG) the chain is on the lumenal side. A helical transmembrane segment spans residues 53-73 (IIFLFVLANFSMATFMDPGVF). The Cytoplasmic portion of the chain corresponds to 74-148 (PRADEDEDKE…NCIGRRNYRY (75 aa)). Residues 104-154 (KWCATCHFYRPPRCSHCSVCDNCVEDFDHHCPWVNNCIGRRNYRYFFLFLL) form the DHHC domain. The active-site S-palmitoyl cysteine intermediate is the Cys-134. The helical transmembrane segment at 149 to 169 (FFLFLLSLSAHMVGVVAFGLV) threads the bilayer. Over 170–190 (YVLNHAEGLGAAHTTITMAVM) the chain is Lumenal. The chain crosses the membrane as a helical span at residues 191-211 (CVAGLFFIPVIGLTGFHVVLV). Residues 212–765 (TRGRTTNEHV…VGGTTYEISV (554 aa)) lie on the Cytoplasmic side of the membrane. The interval 290 to 386 (LKAGLGRSKS…PGPDSLTLGE (97 aa)) is disordered. Positions 301–311 (GSLDRLDEKPL) are enriched in basic and acidic residues. A compositionally biased stretch (polar residues) spans 333–348 (PRPSSAESALSAQRTS). Ser-337 is subject to Phosphoserine. Position 441 is an omega-N-methylarginine (Arg-441). The segment at 447-542 (ALQPLRSEGG…PREPSPVRYD (96 aa)) is disordered. Residues Ser-606 and Ser-627 each carry the phosphoserine modification. A disordered region spans residues 630 to 747 (SLSSAVSRAP…PGPSASPARH (118 aa)). Residues 639 to 655 (PRTSSSSLQADLANNNA) are compositionally biased toward polar residues. Residues 671–680 (QGPPSPPSTP) are compositionally biased toward pro residues. Residues Ser-675, Ser-682, Ser-725, and Ser-743 each carry the phosphoserine modification.

It belongs to the DHHC palmitoyltransferase family. ERF2/ZDHHC9 subfamily.

It localises to the golgi apparatus membrane. The protein resides in the mitochondrion membrane. The catalysed reaction is L-cysteinyl-[protein] + hexadecanoyl-CoA = S-hexadecanoyl-L-cysteinyl-[protein] + CoA. Its function is as follows. Palmitoyltransferase that catalyzes the addition of palmitate onto various protein substrates and therefore functions in several unrelated biological processes. Through the palmitoylation of ABCA1 regulates the localization of the transporter to the plasma membrane and thereby regulates its function in cholesterol and phospholipid efflux. Could also pamitoylate the D(2) dopamine receptor DRD2 and regulate its stability and localization to the plasma membrane. Could also play a role in glutamatergic transmission. This is Palmitoyltransferase ZDHHC8 from Canis lupus familiaris (Dog).